The following is a 543-amino-acid chain: Cytochrome P450 monooxygenase sphH (543 aa).

Transmembrane regions (helical) follow at residues 1-21 and 32-52; these read MGPIHNYFGVVCLGIAASVYF and IATFAVLLTGIAISKLLYQLF. Position 487 (Cys-487) interacts with heme.

Belongs to the cytochrome P450 family. The cofactor is heme.

It localises to the membrane. It carries out the reaction presphingofungin + 2 reduced [NADPH--hemoprotein reductase] + O2 = sphingofungin B1 + 2 oxidized [NADPH--hemoprotein reductase] + H2O + 2 H(+). It functions in the pathway secondary metabolite biosynthesis. Its function is as follows. Cytochrome P450 monooxygenase; part of the gene cluster that mediates the biosynthesis of sphingofungins, bioactive molecules acting as sphingolipid inhibitors via inhibiting serine palmitoyl transferase (SPT). Within the pathway, sphH catalyzes the conversion of presphingofungin into sphingofungin B1 via hydroxylagtion at position C-14. Sphingofungin biosynthesis starts with the PKS sphB that produces an C18 polyketide precursor 3-hydroxyoctadeca-4,10-dienoyl-ACP containing one delta-6 desaturation and one delta-12 desaturation. The aminoacyl transferase sphA uses the sphB product to produce 3-keto-presphingofungin by adding an aminomalonate molecule. SphF then reduces the C-3 ketone of 3-keto-presphingofungin which leads to presphingofungin. The cytochrome P450 monooxygenase sphH converts presphingofungin into sphingofungin B1 which is further converted to sphingofungin B by the dioxygenase sphC. SphC is also able to convert presphingofungin into sphingofungin B2. The acetyltransferase sphE acetylates sphingofungin B to produce sphingofungin C, but can also convert sphingofungin B1 into sphingofungin C1 and sphingofungin B2 into sphingofungin C2. Finally, sphingofungin C can be spontaneously converted into sphingofungin D. This is Cytochrome P450 monooxygenase sphH from Aspergillus fumigatus (strain CBS 144.89 / FGSC A1163 / CEA10) (Neosartorya fumigata).